We begin with the raw amino-acid sequence, 191 residues long: Large ribosomal subunit protein bL9c (191 aa).

Residues 1 to 35 (MASPSCASTLPWTAAAFSYPRRLQTRRAPSLVIVA) constitute a chloroplast transit peptide.

This sequence belongs to the bacterial ribosomal protein bL9 family. Part of the 50S ribosomal subunit.

The protein localises to the plastid. The protein resides in the chloroplast. Binds to the 23S rRNA. The sequence is that of Large ribosomal subunit protein bL9c (RPL9) from Triticum aestivum (Wheat).